The following is a 251-amino-acid chain: Isoprenyl transferase (251 aa).

The active site involves Asp24. Asp24 provides a ligand contact to Mg(2+). Substrate-binding positions include 25-28, Trp29, Arg37, His41, and 69-71; these read GNGR and STE. The active-site Proton acceptor is Asn72. Substrate contacts are provided by residues Trp73, Arg75, Arg186, and 192–194; that span reads RIS. Mg(2+) is bound at residue Glu205.

It belongs to the UPP synthase family. As to quaternary structure, homodimer. The cofactor is Mg(2+).

Functionally, catalyzes the condensation of isopentenyl diphosphate (IPP) with allylic pyrophosphates generating different type of terpenoids. The chain is Isoprenyl transferase from Chromobacterium violaceum (strain ATCC 12472 / DSM 30191 / JCM 1249 / CCUG 213 / NBRC 12614 / NCIMB 9131 / NCTC 9757 / MK).